The following is a 400-amino-acid chain: Queuine tRNA-ribosyltransferase (400 aa).

Residue Asp93 is the Proton acceptor of the active site. Residues 93–97, Asp147, Gln190, and Gly217 contribute to the substrate site; that span reads DSGGF. The tract at residues 248–254 is RNA binding; the sequence is GVGSPED. The active-site Nucleophile is the Asp267. The tract at residues 272-276 is RNA binding; important for wobble base 34 recognition; sequence TRIAR. Zn(2+) contacts are provided by Cys305, Cys307, Cys310, and His336. Positions 375-400 are disordered; sequence RRERARAAGGAGHAPGPAEPLLPENR. The span at 388–400 shows a compositional bias: low complexity; sequence APGPAEPLLPENR.

It belongs to the queuine tRNA-ribosyltransferase family. In terms of assembly, homodimer. Within each dimer, one monomer is responsible for RNA recognition and catalysis, while the other monomer binds to the replacement base PreQ1. The cofactor is Zn(2+).

It catalyses the reaction 7-aminomethyl-7-carbaguanine + guanosine(34) in tRNA = 7-aminomethyl-7-carbaguanosine(34) in tRNA + guanine. The protein operates within tRNA modification; tRNA-queuosine biosynthesis. Functionally, catalyzes the base-exchange of a guanine (G) residue with the queuine precursor 7-aminomethyl-7-deazaguanine (PreQ1) at position 34 (anticodon wobble position) in tRNAs with GU(N) anticodons (tRNA-Asp, -Asn, -His and -Tyr). Catalysis occurs through a double-displacement mechanism. The nucleophile active site attacks the C1' of nucleotide 34 to detach the guanine base from the RNA, forming a covalent enzyme-RNA intermediate. The proton acceptor active site deprotonates the incoming PreQ1, allowing a nucleophilic attack on the C1' of the ribose to form the product. After dissociation, two additional enzymatic reactions on the tRNA convert PreQ1 to queuine (Q), resulting in the hypermodified nucleoside queuosine (7-(((4,5-cis-dihydroxy-2-cyclopenten-1-yl)amino)methyl)-7-deazaguanosine). The protein is Queuine tRNA-ribosyltransferase of Symbiobacterium thermophilum (strain DSM 24528 / JCM 14929 / IAM 14863 / T).